The sequence spans 370 residues: Zinc finger protein 830 (370 aa).

Disordered stretches follow at residues 1–21 (MASS…QEEL) and 75–220 (HRER…LVPH). Alanine 2 is modified (N-acetylalanine). The stretch at 16-40 (VNQEELRRLMKEKQRLSTNRKRIES) forms a coiled coil. A C2H2-type zinc finger spans residues 53–75 (CALCNTPVKSELLWQTHVLGKQH). Residues 90-99 (QGPSAGTAPQ) are compositionally biased toward polar residues. The span at 104-115 (KTTDVESQDAKK) shows a compositional bias: basic and acidic residues. Positions 121–134 (DQVQPSTSASSANF) are enriched in polar residues. The span at 156 to 171 (DYEEEEEEEEEEELGG) shows a compositional bias: acidic residues. A compositionally biased stretch (basic and acidic residues) spans 172–191 (GEERRDSSKHLPDAQGREHS). Positions 196–212 (RETTSNVLPNDPFNTNP) are enriched in polar residues. The residue at position 223 (serine 223) is a Phosphoserine. Positions 310–338 (IECYRRVEKLRNRQDEIKNKLKEVLTIKE) form a coiled coil. 2 positions are modified to phosphoserine: serine 349 and serine 360.

In terms of assembly, component of the XAB2 complex, a multimeric protein complex composed of XAB2, PRPF19, AQR, ZNF830, ISY1, and PPIE; this complex binds preferentially to RNA. Interacts with XAB2. Identified in a pentameric intron-binding (IB) complex composed of AQR, XAB2, ISY1, ZNF830 and PPIE that is incorporated into the spliceosome as a preassembled complex. The IB complex does not contain PRPF19. In terms of processing, phosphorylated in response to DNA damage by the cell cycle checkpoint kinases ATR/ATM.

It localises to the nucleus. The protein localises to the chromosome. The protein resides in the nucleus speckle. Functionally, may play a role in pre-mRNA splicing as component of the spliceosome. Acts as an important regulator of the cell cycle that participates in the maintenance of genome integrity. During cell cycle progression in embryonic fibroblast, prevents replication fork collapse, double-strand break formation and cell cycle checkpoint activation. Controls mitotic cell cycle progression and cell survival in rapidly proliferating intestinal epithelium and embryonic stem cells. During the embryo preimplantation, controls different aspects of M phase. During early oocyte growth, plays a role in oocyte survival by preventing chromosomal breaks formation, activation of TP63 and reduction of transcription. The chain is Zinc finger protein 830 from Rattus norvegicus (Rat).